The chain runs to 277 residues: Release factor glutamine methyltransferase (277 aa).

Residues 119 to 123 (GTGTG), Asp142, and Asn184 each bind S-adenosyl-L-methionine. Position 184–187 (184–187 (NPPY)) interacts with substrate.

This sequence belongs to the protein N5-glutamine methyltransferase family. PrmC subfamily.

It catalyses the reaction L-glutaminyl-[peptide chain release factor] + S-adenosyl-L-methionine = N(5)-methyl-L-glutaminyl-[peptide chain release factor] + S-adenosyl-L-homocysteine + H(+). In terms of biological role, methylates the class 1 translation termination release factors RF1/PrfA and RF2/PrfB on the glutamine residue of the universally conserved GGQ motif. The protein is Release factor glutamine methyltransferase of Enterococcus faecalis (strain ATCC 700802 / V583).